The sequence spans 242 residues: Serine hydrolase cnsH (242 aa).

Residues serine 56, aspartate 138, and histidine 216 each act as charge relay system in the active site.

The protein belongs to the AB hydrolase 3 family.

It functions in the pathway alkaloid biosynthesis. Its function is as follows. Serine hydrolase; part of the gene cluster that mediates the biosynthesis of communesins, a prominent class of indole alkaloids with great potential as pharmaceuticals. Communesins are biosynthesized by the coupling of tryptamine and aurantioclavine, two building blocks derived from L-tryptophan. The L-tryptophan decarboxylase cnsB converts L-tryptophan to tryptamine, whereas the tryptophan dimethylallyltransferase cnsF converts L-tryptophan to 4-dimethylallyl tryptophan which is further transformed to aurantioclavine by the aurantioclavine synthase cnsA, probably aided by the catalase cnsD. The cytochrome P450 monooxygenase cnsC catalyzes the heterodimeric coupling between the two different indole moieties, tryptamine and aurantioclavine, to construct vicinal quaternary stereocenters and yield the heptacyclic communesin scaffold. The O-methyltransferase cnsE then methylates the communesin scaffold to produce communesin K, the simplest characterized communesin that contains the heptacyclic core. The dioxygenase cnsJ converts communesin K into communesin I. Acylation to introduce the hexadienyl group at position N16 of communesin I by the acyltransferase cnsK leads to the production of communesin B. The hexadienyl group is produced by the highly reducing polyketide synthase cnsI, before being hydrolytically removed from cnsI by the serine hydrolase cnsH, converted into hexadienyl-CoA by the CoA ligase cnsG, and then transferred to communesin I by cnsK. Surprisingly, cnsK may also be a promiscuous acyltransferase that can tolerate a range of acyl groups, including acetyl-, propionyl-, and butyryl-CoA, which lead to communesins A, G and H respectively. The roles of the alpha-ketoglutarate-dependent dioxygenases cnsM and cnsP have still to be determined. The chain is Serine hydrolase cnsH from Penicillium expansum (Blue mold rot fungus).